The chain runs to 449 residues: Glucose-6-phosphate isomerase (449 aa).

The active-site Proton donor is the E291. Active-site residues include H312 and K426.

Belongs to the GPI family.

It is found in the cytoplasm. It carries out the reaction alpha-D-glucose 6-phosphate = beta-D-fructose 6-phosphate. It functions in the pathway carbohydrate biosynthesis; gluconeogenesis. It participates in carbohydrate degradation; glycolysis; D-glyceraldehyde 3-phosphate and glycerone phosphate from D-glucose: step 2/4. Catalyzes the reversible isomerization of glucose-6-phosphate to fructose-6-phosphate. This Streptococcus thermophilus (strain CNRZ 1066) protein is Glucose-6-phosphate isomerase.